The primary structure comprises 347 residues: Phenylalanine--tRNA ligase alpha subunit (347 aa).

E265 provides a ligand contact to Mg(2+).

Belongs to the class-II aminoacyl-tRNA synthetase family. Phe-tRNA synthetase alpha subunit type 1 subfamily. As to quaternary structure, tetramer of two alpha and two beta subunits. The cofactor is Mg(2+).

The protein localises to the cytoplasm. The enzyme catalyses tRNA(Phe) + L-phenylalanine + ATP = L-phenylalanyl-tRNA(Phe) + AMP + diphosphate + H(+). This is Phenylalanine--tRNA ligase alpha subunit from Wolbachia sp. subsp. Drosophila simulans (strain wRi).